The sequence spans 859 residues: Alanine--tRNA ligase (859 aa).

Residues H562, H566, C664, and H668 each contribute to the Zn(2+) site.

It belongs to the class-II aminoacyl-tRNA synthetase family. The cofactor is Zn(2+).

Its subcellular location is the cytoplasm. The catalysed reaction is tRNA(Ala) + L-alanine + ATP = L-alanyl-tRNA(Ala) + AMP + diphosphate. Its function is as follows. Catalyzes the attachment of alanine to tRNA(Ala) in a two-step reaction: alanine is first activated by ATP to form Ala-AMP and then transferred to the acceptor end of tRNA(Ala). Also edits incorrectly charged Ser-tRNA(Ala) and Gly-tRNA(Ala) via its editing domain. The chain is Alanine--tRNA ligase from Aliivibrio fischeri (strain ATCC 700601 / ES114) (Vibrio fischeri).